Here is a 296-residue protein sequence, read N- to C-terminus: (3R)-3-[(carboxymethyl)amino]fatty acid oxygenase/decarboxylase (296 aa).

(3R)-3-[(carboxymethyl)amino]butanoate-binding residues include Tyr66, Tyr71, and Gly98. Tyr66, Tyr71, and Gly98 together coordinate (3R)-3-{[carboxy(hydroxy)methyl]amino}butanoate. Residues His102 and Asp104 each coordinate Fe(2+). The (3R)-3-[(carboxymethyl)amino]butanoate site is built by Tyr105 and Lys163. Residues Tyr105 and Lys163 each contribute to the (3R)-3-{[carboxy(hydroxy)methyl]amino}butanoate site. Position 265 (His265) interacts with Fe(2+). 2-oxoglutarate is bound at residue His269. (3R)-3-[(carboxymethyl)amino]butanoate is bound at residue Arg280. Arg280 lines the (3R)-3-{[carboxy(hydroxy)methyl]amino}butanoate pocket.

Belongs to the TfdA dioxygenase family. The cofactor is Fe(2+).

It catalyses the reaction a (3R)-3-[(carboxymethyl)amino]fatty acid + 2 2-oxoglutarate + 2 O2 = a (3R)-3-isocyanyl-fatty acid + 2 succinate + 3 CO2 + 2 H2O. It carries out the reaction a (3R)-3-[(carboxymethyl)amino]fatty acid + 2-oxoglutarate + O2 = a (3R)-3-{[carboxy(hydroxy)methyl]amino}fatty acid + succinate + CO2. The catalysed reaction is a (3R)-3-{[carboxy(hydroxy)methyl]amino}fatty acid + 2-oxoglutarate + O2 = a (3R)-3-isocyanyl-fatty acid + succinate + 2 CO2 + 2 H2O. The enzyme catalyses (3R)-3-[(carboxymethyl)amino]butanoate + 2 2-oxoglutarate + 2 O2 = (3R)-3-isocyanylbutanoate + 2 succinate + 3 CO2 + 2 H2O. It catalyses the reaction (3R)-3-[(carboxymethyl)amino]butanoate + 2-oxoglutarate + O2 = (3R)-3-{[carboxy(hydroxy)methyl]amino}butanoate + succinate + CO2. It carries out the reaction (3R)-3-{[carboxy(hydroxy)methyl]amino}butanoate + 2-oxoglutarate + O2 = (3R)-3-isocyanylbutanoate + succinate + 2 CO2 + 2 H2O. Its function is as follows. Involved in the biosynthesis of a unique class of isonitrile lipopeptides (INLPs). Catalyzes the conversion of (3R)-3-[(carboxymethyl)amino]fatty acids such as (3R)-3-[(carboxymethyl)amino]butanoate (CABA) to (3R)-3-isocyanylbutanoate (INBA) through an oxidative decarboxylation mechanism, thereby generating the isonitrile group of INLPs. In Streptomyces coeruleorubidus, this protein is (3R)-3-[(carboxymethyl)amino]fatty acid oxygenase/decarboxylase.